Here is a 276-residue protein sequence, read N- to C-terminus: 4-deoxy-L-threo-5-hexosulose-uronate ketol-isomerase (276 aa).

Residues His-194, His-196, Glu-201, and His-243 each contribute to the Zn(2+) site.

It belongs to the KduI family. The cofactor is Zn(2+).

It carries out the reaction 5-dehydro-4-deoxy-D-glucuronate = 3-deoxy-D-glycero-2,5-hexodiulosonate. It participates in glycan metabolism; pectin degradation; 2-dehydro-3-deoxy-D-gluconate from pectin: step 4/5. Functionally, catalyzes the isomerization of 5-dehydro-4-deoxy-D-glucuronate to 3-deoxy-D-glycero-2,5-hexodiulosonate. This chain is 4-deoxy-L-threo-5-hexosulose-uronate ketol-isomerase, found in Halalkalibacterium halodurans (strain ATCC BAA-125 / DSM 18197 / FERM 7344 / JCM 9153 / C-125) (Bacillus halodurans).